The sequence spans 526 residues: Peptide chain release factor 3 (526 aa).

One can recognise a tr-type G domain in the interval 9–277; the sequence is DKRRTFAIIS…GIVEWAPKPQ (269 aa). Residues 18-25, 86-90, and 140-143 contribute to the GTP site; these read SHPDAGKT, DTPGH, and NKLD.

Belongs to the TRAFAC class translation factor GTPase superfamily. Classic translation factor GTPase family. PrfC subfamily.

Its subcellular location is the cytoplasm. In terms of biological role, increases the formation of ribosomal termination complexes and stimulates activities of RF-1 and RF-2. It binds guanine nucleotides and has strong preference for UGA stop codons. It may interact directly with the ribosome. The stimulation of RF-1 and RF-2 is significantly reduced by GTP and GDP, but not by GMP. The chain is Peptide chain release factor 3 from Shewanella woodyi (strain ATCC 51908 / MS32).